We begin with the raw amino-acid sequence, 85 residues long: Putative membrane protein insertion efficiency factor (85 aa).

This sequence belongs to the UPF0161 family.

It localises to the cell inner membrane. Its function is as follows. Could be involved in insertion of integral membrane proteins into the membrane. The sequence is that of Putative membrane protein insertion efficiency factor from Enterobacter sp. (strain 638).